Here is a 628-residue protein sequence, read N- to C-terminus: Voltage-gated potassium channel KCNC4 (628 aa).

2 disordered regions span residues 1 to 24 (MISS…SKTC) and 62 to 88 (LAWL…GSSG). The tract at residues 1–28 (MISSVCVSSYRGRKSGNKPPSKTCLKEE) is inactivation gate. Residues 1-230 (MISSVCVSSY…EDPYSSRAAR (230 aa)) are Cytoplasmic-facing. Phosphoserine occurs at positions 8, 9, 15, and 21. Positions 77-88 (DGGGAGSSGSSG) are enriched in gly residues. Positions 120, 126, 147, and 148 each coordinate Zn(2+). The chain crosses the membrane as a helical span at residues 231-251 (VVAFASLFFILVSITTFCLET). N260 and N269 each carry an N-linked (GlcNAc...) asparagine glycan. Residues 282–302 (EPILTYIEGVCVMWFTLEFLV) traverse the membrane as a helical segment. The Cytoplasmic portion of the chain corresponds to 303 to 316 (RIVCCPDTLDFVKN). A helical membrane pass occupies residues 317–337 (LLNIIDFVAILPFYLEVGLSG). Residues 349–368 (FLRVVRFVRILRIFKLTRHF) traverse the membrane as a helical; Voltage-sensor segment. Topologically, residues 369–384 (VGLRVLGHTLRASTNE) are cytoplasmic. A helical membrane pass occupies residues 385–405 (FLLLIIFLALGVLIFATMIYY). Residues T440, L441, G442, and Y443 each coordinate K(+). A Selectivity filter motif is present at residues 440–445 (TLGYGD). The helical transmembrane segment at 456 to 476 (VGALCALAGVLTIAMPVPVIV) threads the bilayer. The Cytoplasmic segment spans residues 477 to 628 (NNFGMYYSLA…CVPVSHTCAL (152 aa)). The interval 493–584 (PKKRKKHVPR…RRALRRSGTR (92 aa)) is disordered. Over residues 531–546 (AREEGVVERKRADSKQ) the composition is skewed to basic and acidic residues.

The protein belongs to the potassium channel family. C (Shaw) (TC 1.A.1.2) subfamily. Kv3.4/KCNC4 sub-subfamily. In terms of assembly, homotetramer. Heterotetramer of potassium channel proteins. In terms of processing, phosphorylation of serine residues in the inactivation gate inhibits rapid channel closure.

It localises to the membrane. The enzyme catalyses K(+)(in) = K(+)(out). Its function is as follows. Voltage-gated potassium channel that opens in response to the voltage difference across the membrane, forming a potassium-selective channel through which potassium ions pass in accordance with their electrochemical gradient. The channel displays rapid activation and inactivation kinetics. This is Voltage-gated potassium channel KCNC4 from Mus musculus (Mouse).